Here is a 92-residue protein sequence, read N- to C-terminus: Small ribosomal subunit protein bS18 (92 aa).

It belongs to the bacterial ribosomal protein bS18 family. In terms of assembly, part of the 30S ribosomal subunit. Forms a tight heterodimer with protein bS6.

Functionally, binds as a heterodimer with protein bS6 to the central domain of the 16S rRNA, where it helps stabilize the platform of the 30S subunit. The sequence is that of Small ribosomal subunit protein bS18 from Cupriavidus taiwanensis (strain DSM 17343 / BCRC 17206 / CCUG 44338 / CIP 107171 / LMG 19424 / R1) (Ralstonia taiwanensis (strain LMG 19424)).